A 176-amino-acid chain; its full sequence is Ribosome maturation factor RimM (176 aa).

Positions 99 to 174 (KNEFYITDLI…IVLIQPEIWN (76 aa)) constitute a PRC barrel domain.

This sequence belongs to the RimM family. Binds ribosomal protein uS19.

Its subcellular location is the cytoplasm. In terms of biological role, an accessory protein needed during the final step in the assembly of 30S ribosomal subunit, possibly for assembly of the head region. Essential for efficient processing of 16S rRNA. May be needed both before and after RbfA during the maturation of 16S rRNA. It has affinity for free ribosomal 30S subunits but not for 70S ribosomes. The protein is Ribosome maturation factor RimM of Leptospira interrogans serogroup Icterohaemorrhagiae serovar copenhageni (strain Fiocruz L1-130).